Consider the following 506-residue polypeptide: Gamma-aminobutyric acid receptor subunit epsilon (506 aa).

A signal peptide spans 1–17 (MLPKVLLMLLNMFLALQ). Residues 18-277 (WRVGPHIKLE…MTFFFNVSRR (260 aa)) are Extracellular-facing. The interval 32–65 (AQDKVVFGPQPQPSGKKLPARETELTADHTTERP) is disordered. Positions 50-65 (PARETELTADHTTERP) are enriched in basic and acidic residues. A glycan (N-linked (GlcNAc...) asparagine) is linked at Asn-135. Cys-196 and Cys-210 form a disulfide bridge. A glycan (N-linked (GlcNAc...) asparagine) is linked at Asn-253. Residues 278–298 (FGFIVFQNYIPSSVTTMLSWV) traverse the membrane as a helical segment. Residues 299 to 308 (SFWIKIEAAA) are Cytoplasmic-facing. Residues 309–328 (ARASVGVSSVLTMATLGTFS) form a helical membrane-spanning segment. Residues 329–344 (RKNFPRVSYLTALDFY) are Extracellular-facing. A helical transmembrane segment spans residues 345-365 (IAICFVLCFCTLLEFTVLNFL). Residues 366 to 485 (TYNNIERQAS…HVYRLDNYSR (120 aa)) are Cytoplasmic-facing. Residues 486–506 (VLFPITFFFFNVVYWVICLNL) traverse the membrane as a helical segment.

The protein belongs to the ligand-gated ion channel (TC 1.A.9) family. Gamma-aminobutyric acid receptor (TC 1.A.9.5) subfamily. GABRE sub-subfamily. Heteropentamer, formed by a combination of alpha (GABRA1-6), beta (GABRB1-3), gamma (GABRG1-3), delta (GABRD), epsilon (GABRE), rho (GABRR1-3), pi (GABRP) and theta (GABRQ) chains, each subunit exhibiting distinct physiological and pharmacological properties. In terms of tissue distribution, expressed in brain and heart. Strongly expressed in locus ceruleus from the first postnatal day. Weakly expressed in other brainstem nuclei and in the hypothalamus. Found in the cerebral cortex of pups.

It localises to the cell membrane. The protein localises to the postsynaptic cell membrane. The enzyme catalyses chloride(in) = chloride(out). In terms of biological role, epsilon subunit of the heteropentameric ligand-gated chloride channel gated by gamma-aminobutyric acid (GABA), a major inhibitory neurotransmitter in the brain. GABA-gated chloride channels, also named GABA(A) receptors (GABAAR), consist of five subunits arranged around a central pore and contain GABA active binding site(s) located at the alpha and beta subunit interfaces. When activated by GABA, GABAARs selectively allow the flow of chloride anions across the cell membrane down their electrochemical gradient. GABARs containing epsilon subunit may also permit spontaneous chloride channel activity while preserving the structural information required for GABA-gated openings. GABARs containing epsilon subunit may regulate cardiac function. The polypeptide is Gamma-aminobutyric acid receptor subunit epsilon (Rattus norvegicus (Rat)).